The following is a 239-amino-acid chain: UPF0641 membrane protein YHR140W (239 aa).

The Cytoplasmic segment spans residues 1–11; sequence MMSCLVPTRFT. The helical transmembrane segment at 12–31 threads the bilayer; the sequence is LTLNTACLLTSTWGFVRATS. The Lumenal segment spans residues 32 to 45; that stretch reads VVLPPSLSKAGHKQ. A helical membrane pass occupies residues 46 to 66; it reads FLTIISIIATIINNAVNISNY. Topologically, residues 67–99 are cytoplasmic; it reads YIQRNNKMNLETKKKSDFISRHVTLPVSLVLES. Residues 100–120 traverse the membrane as a helical segment; sequence IVATVYWPLRLFFVNLIMHGV. Topologically, residues 121–125 are lumenal; that stretch reads ESTAK. A helical transmembrane segment spans residues 126–146; it reads TPFPMTVDMAIHLYPILYLLA. The Cytoplasmic portion of the chain corresponds to 147-162; sequence DHYLSGSGTKFKLSNK. A helical membrane pass occupies residues 163-183; it reads HAWLIVTSLAFSYFQYLAFLI. Residues 184–204 lie on the Lumenal side of the membrane; it reads DAGQGQAYPYPFLDVNEPYKS. A helical transmembrane segment spans residues 205–225; that stretch reads IIFVVVATITWAYYVFYQKFP. Over 226 to 239 the chain is Cytoplasmic; the sequence is PKYIKKSAKKGDKN.

This sequence belongs to the UPF0641 family.

The protein localises to the endoplasmic reticulum membrane. The chain is UPF0641 membrane protein YHR140W from Saccharomyces cerevisiae (strain ATCC 204508 / S288c) (Baker's yeast).